Consider the following 158-residue polypeptide: MQGRSSAWLVKHELVHRSLGFDYQGVETLQIKPEDWYSIAVISYVYGYNYLRSQCAYDVAPGGLLASVYHLTRIQYGVDQPEEVCIKVFVPRSNPRIPSVFWIWKSADFQERESYDMLGISYDNHPRMKRILMPESWIGWPLRKDYIAPNFYELQDAY.

It belongs to the complex I 30 kDa subunit family. In terms of assembly, NDH is composed of at least 16 different subunits, 5 of which are encoded in the nucleus.

The protein resides in the plastid. It localises to the chloroplast thylakoid membrane. The catalysed reaction is a plastoquinone + NADH + (n+1) H(+)(in) = a plastoquinol + NAD(+) + n H(+)(out). It carries out the reaction a plastoquinone + NADPH + (n+1) H(+)(in) = a plastoquinol + NADP(+) + n H(+)(out). Its function is as follows. NDH shuttles electrons from NAD(P)H:plastoquinone, via FMN and iron-sulfur (Fe-S) centers, to quinones in the photosynthetic chain and possibly in a chloroplast respiratory chain. The immediate electron acceptor for the enzyme in this species is believed to be plastoquinone. Couples the redox reaction to proton translocation, and thus conserves the redox energy in a proton gradient. The sequence is that of NAD(P)H-quinone oxidoreductase subunit J, chloroplastic from Nymphaea alba (White water-lily).